The following is a 315-amino-acid chain: Gamma-hemolysin component C (315 aa).

An N-terminal signal peptide occupies residues 1 to 29; it reads MLKNKILTTTLSVSLLAPLANPLLENAKA.

This sequence belongs to the aerolysin family. Toxicity requires sequential binding and synergistic association of a class S and a class F component which form heterooligomeric complexes. HlgC (class S) associates with HlgB (class F) thus forming an CB toxin.

Its function is as follows. Toxin that seems to act by forming pores in the membrane of the cell. Has a hemolytic and a leucotoxic activity. This Staphylococcus aureus (strain COL) protein is Gamma-hemolysin component C (hlgC).